The chain runs to 229 residues: Demethylmenaquinone methyltransferase (229 aa).

S-adenosyl-L-methionine contacts are provided by residues T57, D77, and 101-102 (DV).

The protein belongs to the class I-like SAM-binding methyltransferase superfamily. MenG/UbiE family.

It catalyses the reaction a 2-demethylmenaquinol + S-adenosyl-L-methionine = a menaquinol + S-adenosyl-L-homocysteine + H(+). Its pathway is quinol/quinone metabolism; menaquinone biosynthesis; menaquinol from 1,4-dihydroxy-2-naphthoate: step 2/2. Functionally, methyltransferase required for the conversion of demethylmenaquinol (DMKH2) to menaquinol (MKH2). In Chlamydia muridarum (strain MoPn / Nigg), this protein is Demethylmenaquinone methyltransferase.